Reading from the N-terminus, the 159-residue chain is Ribosomal RNA large subunit methyltransferase H (159 aa).

S-adenosyl-L-methionine is bound by residues L76, G108, and F127–F132.

It belongs to the RNA methyltransferase RlmH family. Homodimer.

The protein localises to the cytoplasm. The enzyme catalyses pseudouridine(1915) in 23S rRNA + S-adenosyl-L-methionine = N(3)-methylpseudouridine(1915) in 23S rRNA + S-adenosyl-L-homocysteine + H(+). In terms of biological role, specifically methylates the pseudouridine at position 1915 (m3Psi1915) in 23S rRNA. The chain is Ribosomal RNA large subunit methyltransferase H from Streptococcus thermophilus (strain CNRZ 1066).